A 152-amino-acid polypeptide reads, in one-letter code: Ribosomal RNA large subunit methyltransferase H (152 aa).

S-adenosyl-L-methionine is bound by residues Leu-71, Gly-101, and 120 to 125 (LSKLTF).

The protein belongs to the RNA methyltransferase RlmH family. Homodimer.

It is found in the cytoplasm. It carries out the reaction pseudouridine(1915) in 23S rRNA + S-adenosyl-L-methionine = N(3)-methylpseudouridine(1915) in 23S rRNA + S-adenosyl-L-homocysteine + H(+). In terms of biological role, specifically methylates the pseudouridine at position 1915 (m3Psi1915) in 23S rRNA. The chain is Ribosomal RNA large subunit methyltransferase H from Thermosipho melanesiensis (strain DSM 12029 / CIP 104789 / BI429).